The primary structure comprises 373 residues: Response regulator aspartate phosphatase J (373 aa).

TPR repeat units follow at residues 99 to 135 (YYFY…VEDE) and 146 to 179 (AEVY…GRRR). E147, Y150, Q181, D192, Y217, N225, H228, Q260, Y297, K300, and D335 together coordinate L-glutamyl-L-arginyl-glycyl-L-methionyl-L-threonine. TPR repeat units follow at residues 220–253 (AAAY…FEEH) and 259–292 (VQAV…AAEW). The stretch at 334–367 (EDLLHDTAERFNQLEHYESAAFFYRRLMNIKKKL) is one TPR 5 repeat.

This sequence belongs to the Rap family. Monomer in solution. Homodimer.

The protein resides in the cytoplasm. With respect to regulation, inhibited in vitro by the competence and sporulation stimulating factor (CSF), encoded by phrC. However, CSF has at least three targets (RapB, RapC, and RapJ) and the physiological importance of RapJ inhibition by CSF is unknown. Interaction with CSF induces a conformational change in RapJ. Its function is as follows. Involved in the regulation of sporulation. Acts as a phosphatase that specifically dephosphorylates the sporulation initiation phosphotransferase Spo0F and inhibits its activity. This chain is Response regulator aspartate phosphatase J (rapJ), found in Bacillus subtilis (strain 168).